Consider the following 722-residue polypeptide: MGDEDWEAEINPHVSSYVPIFEKDGYSGENGDKFNRTTASSSEMDDGPSGRDHFMKSGFTSGRSYGKRDAGESNKRENTSTTGGFGVGKSFGNRGFSNNRFEDGDSSGFWRESTNDCEDNTTRNRGFSKRGGSRDGNKSEASGPFRRGGRGSFRGCRGGFGLGSQNSELDPDQGMQRGGGLFGSGRPAASDTGNGDTYQSRSGRGRGGYKGLNEEVVTGSGKNSWKSEAEGGESSDTQGPKVTYIPPPPPEDEDSIFAHYQTGINFDKYDTILVEVSGHDAPPAILTFEEANLCQTLNNNIAKAGYTKLTPVQKYSIPIILAGRDLMACAQTGSGKTAAFLLPILAHMMHDGITASRFKELQEPECIIVAPTRELVNQIYLEARKFSFGTCVRAVVIYGGTQLGHSIRQIVQGCNILCATPGRLMDIIGKEKIGLKQIKYLVLDEADRMLDMGFGPEMKKLISCPGMPSKEQRQTLMFSATFPEEIQRLAAEFLKSNYLFVAVGQVGGACRDVQQADLQVGQYSKREKLLEILRNIGDERTMVFVETKKKADFIATFLCQEKISTTSIHGDREQREREQALGDFRFGKCPVLVATSVAARGLDIENVQHVINFDLPSTIDEYVHRIGRTGRCGNTGRAISFFDLESDNHLAQPLVKVLTDAQQDVPAWLEEIAFSTYIPGFSGSTRGNVFASVDTRKGKSTLNTAGFSSSQAPNPVDDESWD.

The segment at 1 to 241 (MGDEDWEAEI…GESSDTQGPK (241 aa)) is disordered. Composition is skewed to basic and acidic residues over residues 21–35 (FEKD…DKFN) and 66–78 (GKRD…KREN). Residues 150–162 (RGSFRGCRGGFGL) show a composition bias toward gly residues. A phosphoserine mark is found at S220 and S224. Residues 226–245 (KSEAEGGESSDTQGPKVTYI) are interaction with RANBP9. The short motif at 286–314 (LTFEEANLCQTLNNNIAKAGYTKLTPVQK) is the Q motif element. One can recognise a Helicase ATP-binding domain in the interval 317 to 500 (IPIILAGRDL…AEFLKSNYLF (184 aa)). 330 to 337 (AQTGSGKT) serves as a coordination point for ATP. Residues 444 to 447 (DEAD) carry the DEAD box motif. A Helicase C-terminal domain is found at 528–673 (KLLEILRNIG…DVPAWLEEIA (146 aa)). Residues 702–713 (LNTAGFSSSQAP) show a composition bias toward polar residues. A disordered region spans residues 702 to 722 (LNTAGFSSSQAPNPVDDESWD). A Phosphoserine modification is found at S720.

Belongs to the DEAD box helicase family. DDX4/VASA subfamily. Found in a mRNP complex, at least composed of TDRD1, TDRD6, TDRD7 and DDX4. Interacts with RANBP9. Interacts with RANBP10. Interacts with PIWIL2 and MAEL. Interacts with BMAL1 and CLOCK. Interacts with Tex19.1 and, probably, Tex19.2. Interacts with RBM46.

The protein resides in the cytoplasm. Its subcellular location is the perinuclear region. It catalyses the reaction ATP + H2O = ADP + phosphate + H(+). Functionally, ATP-dependent RNA helicase required during spermatogenesis to repress transposable elements and preventing their mobilization, which is essential for the germline integrity. Acts via the piRNA metabolic process, which mediates the repression of transposable elements during meiosis by forming complexes composed of piRNAs and Piwi proteins and governs the methylation and subsequent repression of transposons. Involved in the secondary piRNAs metabolic process, the production of piRNAs in fetal male germ cells through a ping-pong amplification cycle. Required for PIWIL2 slicing-triggered piRNA biogenesis: helicase activity enables utilization of one of the slice cleavage fragments generated by PIWIL2 and processing these pre-piRNAs into piRNAs. The protein is Probable ATP-dependent RNA helicase DDX4 (DDX4) of Sus scrofa (Pig).